A 427-amino-acid chain; its full sequence is Mitogen-activated protein kinase 8 (427 aa).

Positions 26 to 321 constitute a Protein kinase domain; it reads YQNLKPIGSG…VDEALQHPYI (296 aa). Residues 32-40 and K55 each bind ATP; that span reads IGSGAQGIV. C116 is modified (S-nitrosocysteine). Residue D151 is the Proton acceptor of the active site. T183 is subject to Phosphothreonine; by MAP2K7. The short motif at 183–185 is the TXY element; it reads TPY. At Y185 the chain carries Phosphotyrosine; by MAP2K4. Phosphoserine is present on residues M301 and S377. The tract at residues 371-427 is disordered; sequence VIRGQPSPLGAAVINGSQHPSSSSSVNDVSSMSTDPTLASDTDSSLEAAAGPLGCCR. Positions 387 to 403 are enriched in low complexity; sequence SQHPSSSSSVNDVSSMS. A compositionally biased stretch (polar residues) spans 404–415; that stretch reads TDPTLASDTDSS.

The protein belongs to the protein kinase superfamily. CMGC Ser/Thr protein kinase family. MAP kinase subfamily. As to quaternary structure, forms a complex with MAPK8IP1 and ARHGEF28. Found in a complex with SH3RF1, RAC1, MAP3K11/MLK3, MAP2K7/MKK7 and MAPK8IP1/JIP1. Found in a complex with SH3RF1, RAC2, MAP3K7/TAK1, MAP2K7/MKK7, MAPK8IP1/JIP1 and MAPK9/JNK2. Binds to at least four scaffolding proteins, MAPK8IP1/JIP-1, MAPK8IP2/JIP-2, MAPK8IP3/JIP-3/JSAP1 and SPAG9/MAPK8IP4/JIP-4. These proteins also bind other components of the JNK signaling pathway. Interacts with TP53 and WWOX. Interacts with JAMP. Interacts with HSF1 (via D domain and preferentially with hyperphosphorylated form); this interaction occurs under both normal growth conditions and immediately upon heat shock. Interacts (phosphorylated form) with NFE2; the interaction phosphorylates NFE2 in undifferentiated cells. Interacts with NFATC4. Interacts with MECOM; regulates JNK signaling. Interacts with PIN1; this interaction mediates MAPK8 conformational changes leading to the binding of MAPK8 to its substrates. Interacts with GRIPAP1. Interacts with POU5F1; phosphorylates POU5F1 at 'Ser-355'. Interacts with STMN2, STMN3 and STMN4. Interacts with HSF4. Mg(2+) serves as cofactor. Post-translationally, dually phosphorylated on Thr-183 and Tyr-185 by MAP2K7 and MAP2K4, which activates the enzyme. Phosphorylated by TAOK2. May be phosphorylated at Thr-183 and Tyr-185 by MAP3K1/MEKK1. Phosphorylated form is more concentrated at synapses than none-phosphorylated.

Its subcellular location is the cytoplasm. It is found in the nucleus. It localises to the synapse. The enzyme catalyses L-seryl-[protein] + ATP = O-phospho-L-seryl-[protein] + ADP + H(+). It catalyses the reaction L-threonyl-[protein] + ATP = O-phospho-L-threonyl-[protein] + ADP + H(+). Its activity is regulated as follows. Activated by threonine and tyrosine phosphorylation by either of two dual specificity kinases, MAP2K4 and MAP2K7. MAP2K4 shows a strong preference for Tyr-185 while MAP2K7 phosphorylates Tyr-183 preferentially. Inhibited by dual specificity phosphatases, such as DUSP1. Inhibited by SERPINB3. Functionally, serine/threonine-protein kinase involved in various processes such as cell proliferation, differentiation, migration, transformation and programmed cell death. Extracellular stimuli such as pro-inflammatory cytokines or physical stress stimulate the stress-activated protein kinase/c-Jun N-terminal kinase (SAP/JNK) signaling pathway. In this cascade, two dual specificity kinases MAP2K4/MKK4 and MAP2K7/MKK7 phosphorylate and activate MAPK8/JNK1. In turn, MAPK8/JNK1 phosphorylates a number of transcription factors, primarily components of AP-1 such as JUN, JDP2 and ATF2 and thus regulates AP-1 transcriptional activity. Phosphorylates the replication licensing factor CDT1, inhibiting the interaction between CDT1 and the histone H4 acetylase HBO1 to replication origins. Loss of this interaction abrogates the acetylation required for replication initiation. Promotes stressed cell apoptosis by phosphorylating key regulatory factors including p53/TP53 and Yes-associates protein YAP1. In T-cells, MAPK8 and MAPK9 are required for polarized differentiation of T-helper cells into Th1 cells. Contributes to the survival of erythroid cells by phosphorylating the antagonist of cell death BAD upon EPO stimulation. Mediates starvation-induced BCL2 phosphorylation, BCL2 dissociation from BECN1, and thus activation of autophagy. Phosphorylates STMN2 and hence regulates microtubule dynamics, controlling neurite elongation in cortical neurons. In the developing brain, through its cytoplasmic activity on STMN2, negatively regulates the rate of exit from multipolar stage and of radial migration from the ventricular zone. Phosphorylates several other substrates including heat shock factor protein 4 (HSF4), the deacetylase SIRT1, ELK1, or the E3 ligase ITCH. Phosphorylates the CLOCK-BMAL1 heterodimer and plays a role in the regulation of the circadian clock. Phosphorylates the heat shock transcription factor HSF1, suppressing HSF1-induced transcriptional activity. Phosphorylates POU5F1, which results in the inhibition of POU5F1's transcriptional activity and enhances its proteasomal degradation. Phosphorylates JUND and this phosphorylation is inhibited in the presence of MEN1. In neurons, phosphorylates SYT4 which captures neuronal dense core vesicles at synapses. Phosphorylates EIF4ENIF1/4-ET in response to oxidative stress, promoting P-body assembly. Phosphorylates SIRT6 in response to oxidative stress, stimulating its mono-ADP-ribosyltransferase activity. Phosphorylates NLRP3, promoting assembly of the NLRP3 inflammasome. Phosphorylates ALKBH5 in response to reactive oxygen species (ROS), promoting ALKBH5 sumoylation and inactivation. JNK1 isoforms display different binding patterns: beta-1 preferentially binds to c-Jun, whereas alpha-1, alpha-2, and beta-2 have a similar low level of binding to both c-Jun or ATF2. However, there is no correlation between binding and phosphorylation, which is achieved at about the same efficiency by all isoforms. This Homo sapiens (Human) protein is Mitogen-activated protein kinase 8 (MAPK8).